The primary structure comprises 368 residues: Phosphate acyltransferase (368 aa).

Belongs to the PlsX family. In terms of assembly, homodimer. Probably interacts with PlsY.

It is found in the cytoplasm. It carries out the reaction a fatty acyl-[ACP] + phosphate = an acyl phosphate + holo-[ACP]. Its pathway is lipid metabolism; phospholipid metabolism. Functionally, catalyzes the reversible formation of acyl-phosphate (acyl-PO(4)) from acyl-[acyl-carrier-protein] (acyl-ACP). This enzyme utilizes acyl-ACP as fatty acyl donor, but not acyl-CoA. This chain is Phosphate acyltransferase, found in Herpetosiphon aurantiacus (strain ATCC 23779 / DSM 785 / 114-95).